A 169-amino-acid chain; its full sequence is Protein AIG2 B (169 aa).

Substrate is bound at residue Tyr-15–Glu-20. Catalysis depends on Glu-83, which acts as the Proton acceptor.

The protein belongs to the gamma-glutamylcyclotransferase family. Expressed in roots, leaves and stems.

Functionally, putative gamma-glutamylcyclotransferase. The sequence is that of Protein AIG2 B from Arabidopsis thaliana (Mouse-ear cress).